The chain runs to 495 residues: Membrane-bound lytic murein transglycosylase F (495 aa).

Residues 1-29 (MEIRKLSLSTIRSIITSLSVLVLVISASA) form the signal peptide. The non-LT domain stretch occupies residues 30-273 (TLVRSTPPNV…VTKHFFERHI (244 aa)). The segment at 274 to 495 (DEVTTGEAMV…TAAQGENLSL (222 aa)) is LT domain. E320 is a catalytic residue.

In the N-terminal section; belongs to the bacterial solute-binding protein 3 family. This sequence in the C-terminal section; belongs to the transglycosylase Slt family.

The protein resides in the cell outer membrane. The enzyme catalyses Exolytic cleavage of the (1-&gt;4)-beta-glycosidic linkage between N-acetylmuramic acid (MurNAc) and N-acetylglucosamine (GlcNAc) residues in peptidoglycan, from either the reducing or the non-reducing ends of the peptidoglycan chains, with concomitant formation of a 1,6-anhydrobond in the MurNAc residue.. Murein-degrading enzyme that degrades murein glycan strands and insoluble, high-molecular weight murein sacculi, with the concomitant formation of a 1,6-anhydromuramoyl product. Lytic transglycosylases (LTs) play an integral role in the metabolism of the peptidoglycan (PG) sacculus. Their lytic action creates space within the PG sacculus to allow for its expansion as well as for the insertion of various structures such as secretion systems and flagella. The protein is Membrane-bound lytic murein transglycosylase F of Cellvibrio japonicus (strain Ueda107) (Pseudomonas fluorescens subsp. cellulosa).